A 308-amino-acid polypeptide reads, in one-letter code: Mannan endo-1,4-beta-mannosidase (308 aa).

Glutamate 125 functions as the Proton donor in the catalytic mechanism. Catalysis depends on glutamate 220, which acts as the Nucleophile. Positions 284–308 are disordered; it reads DGLQETSKPSTVFTDDNGGHPEPPT. Residues 287 to 297 are compositionally biased toward polar residues; the sequence is QETSKPSTVFT.

The protein belongs to the glycosyl hydrolase 5 (cellulase A) family.

The enzyme catalyses Random hydrolysis of (1-&gt;4)-beta-D-mannosidic linkages in mannans, galactomannans and glucomannans.. In terms of biological role, catalyzes the endo hydrolysis of beta-1,4-linked mannan, galactomannan and glucomannan. It is able to hydrolyze mannosidic linkages that are flanked by mannose or glucose. This Salipaludibacillus agaradhaerens (Bacillus agaradhaerens) protein is Mannan endo-1,4-beta-mannosidase.